Consider the following 102-residue polypeptide: MESQNIRIRLKAFDHRVLDQSTREIVNTAKRTGAQVRGPIPLPSRIEKFTVNRSPHIDKKSREQFEIRTHKRLLDIVDPTPQTVDALMKLDLAAGVDVEIKL.

This sequence belongs to the universal ribosomal protein uS10 family. As to quaternary structure, part of the 30S ribosomal subunit.

Functionally, involved in the binding of tRNA to the ribosomes. This chain is Small ribosomal subunit protein uS10, found in Paramagnetospirillum magneticum (strain ATCC 700264 / AMB-1) (Magnetospirillum magneticum).